A 252-amino-acid polypeptide reads, in one-letter code: Vitamin B12 import ATP-binding protein BtuD (252 aa).

Residues 2 to 237 (IQIKSLSVGA…EQLESVFNTQ (236 aa)) enclose the ABC transporter domain. 30 to 37 (GPNGSGKS) serves as a coordination point for ATP.

It belongs to the ABC transporter superfamily. Vitamin B12 importer (TC 3.A.1.13.1) family. In terms of assembly, the complex is composed of two ATP-binding proteins (BtuD), two transmembrane proteins (BtuC) and a solute-binding protein (BtuF).

The protein resides in the cell inner membrane. It catalyses the reaction an R-cob(III)alamin(out) + ATP + H2O = an R-cob(III)alamin(in) + ADP + phosphate + H(+). Its function is as follows. Part of the ABC transporter complex BtuCDF involved in vitamin B12 import. Responsible for energy coupling to the transport system. The protein is Vitamin B12 import ATP-binding protein BtuD of Vibrio atlanticus (strain LGP32) (Vibrio splendidus (strain Mel32)).